Here is a 146-residue protein sequence, read N- to C-terminus: Ribonuclease VapC41 (146 aa).

The PINc domain occupies 3–142 (LCDTNIWLAL…FTQYGGIELR (140 aa)). Asp-5 and Asp-112 together coordinate Mg(2+).

The protein belongs to the PINc/VapC protein family. The cofactor is Mg(2+).

In terms of biological role, toxic component of a type II toxin-antitoxin (TA) system. An RNase. Its toxic effect is neutralized by coexpression with cognate antitoxin VapB41. In Mycobacterium tuberculosis (strain CDC 1551 / Oshkosh), this protein is Ribonuclease VapC41.